Consider the following 149-residue polypeptide: Flagellar assembly factor FliW (149 aa).

This sequence belongs to the FliW family. As to quaternary structure, interacts with translational regulator CsrA and flagellin(s).

It is found in the cytoplasm. Acts as an anti-CsrA protein, binds CsrA and prevents it from repressing translation of its target genes, one of which is flagellin. Binds to flagellin and participates in the assembly of the flagellum. This chain is Flagellar assembly factor FliW, found in Thermotoga neapolitana (strain ATCC 49049 / DSM 4359 / NBRC 107923 / NS-E).